The primary structure comprises 264 residues: Putative hydro-lyase cgR_2449 (264 aa).

The protein belongs to the D-glutamate cyclase family.

The sequence is that of Putative hydro-lyase cgR_2449 from Corynebacterium glutamicum (strain R).